Consider the following 401-residue polypeptide: Mu-type opioid receptor (401 aa).

At 1–69 (MDSSAVPANA…CPPTGSPSMI (69 aa)) the chain is on the extracellular side. N9, N12, N34, N41, and N49 each carry an N-linked (GlcNAc...) asparagine glycan. The helical transmembrane segment at 70–94 (TAITIMALYSIVCVVGLFGNFLVMY) threads the bilayer. Topologically, residues 95 to 107 (VIVRYTKMKTATN) are cytoplasmic. A helical transmembrane segment spans residues 108 to 132 (IYIFNLALADALATSTLPFQSVNYL). At 133–143 (MGTWPFGTILC) the chain is on the extracellular side. A disulfide bond links C143 and C220. The chain crosses the membrane as a helical span at residues 144 to 166 (KIVISIDYYNMFTSIFTLCTMSV). The Cytoplasmic segment spans residues 167-186 (DRYIAVCHPVKALDFRTPRN). At Y169 the chain carries Phosphotyrosine. The chain crosses the membrane as a helical span at residues 187-208 (AKIINVCNWILSSAIGLPVMFM). At 209–231 (ATTKYRHGSIDCTLTFSHPTWYW) the chain is on the extracellular side. A helical transmembrane segment spans residues 232 to 256 (ENLLKICVFIFAFIMPVLIITVCYG). At 257–280 (LMILRLKSVRMLSGSKEKDRNLRR) the chain is on the cytoplasmic side. The helical transmembrane segment at 281–307 (ITRMVLVVVAVFIVCWTPIHIYVIIKA) threads the bilayer. Topologically, residues 308-315 (LVTIPETT) are extracellular. The chain crosses the membrane as a helical span at residues 316–339 (FQTVSWHFCIALGYTNSCLNPVLY). Positions 335-339 (NPVLY) match the NPxxY; plays a role in stabilizing the activated conformation of the receptor motif. The Cytoplasmic portion of the chain corresponds to 340–401 (AFLDENFKRC…NLEAETAPLP (62 aa)). Residue C354 is the site of S-palmitoyl cysteine attachment. Residues 365 to 388 (NSTRIRQNTRDHPSTANTVDRTNH) form a disordered region. At S366 the chain carries Phosphoserine. T373 carries the phosphothreonine modification. Residue S378 is modified to Phosphoserine. Residue T397 is modified to Phosphothreonine.

It belongs to the G-protein coupled receptor 1 family. As to quaternary structure, forms homooligomers and heterooligomers with other GPCRs, such as OPRD1, OPRK1, OPRL1, NPFFR2, ADRA2A, SSTR2, CNR1 and CCR5 (probably in dimeric forms). Interacts with heterotrimeric G proteins; interaction with a heterotrimeric complex containing GNAI1, GNB1 and GNG2 stabilizes the active conformation of the receptor and increases its affinity for endomorphin-2, the synthetic opioid peptide DAMGO and for morphinan agonists. Interacts with PPL; the interaction disrupts agonist-mediated G-protein activation. Interacts (via C-terminus) with DNAJB4 (via C-terminus). Interacts with calmodulin; the interaction inhibits the constitutive activity of OPRM1; it abolishes basal and attenuates agonist-stimulated G-protein coupling. Interacts with FLNA, PLD2, RANBP9 and WLS and GPM6A. Interacts with RTP4. Interacts with SYP and GNAS. Interacts with RGS9, RGS17, RGS20, RGS4, PPP1R9B and HINT1. In terms of processing, phosphorylated. Differentially phosphorylated in basal and agonist-induced conditions. Agonist-mediated phosphorylation modulates receptor internalization. Phosphorylated by GRK2 in a agonist-dependent manner. Phosphorylation at Tyr-169 requires receptor activation, is dependent on non-receptor protein tyrosine kinase Src and results in a decrease in agonist efficacy by reducing G-protein coupling efficiency. Phosphorylated on tyrosine residues; the phosphorylation is involved in agonist-induced G-protein-independent receptor down-regulation. Phosphorylation at Ser-378 is involved in G-protein-dependent but not beta-arrestin-dependent activation of the ERK pathway. Post-translationally, ubiquitinated. A basal ubiquitination seems not to be related to degradation. Ubiquitination is increased upon formation of OPRM1:OPRD1 oligomers leading to proteasomal degradation; the ubiquitination is diminished by RTP4.

The protein resides in the cell membrane. Its subcellular location is the cell projection. It is found in the axon. The protein localises to the perikaryon. It localises to the dendrite. The protein resides in the endosome. In terms of biological role, receptor for endogenous opioids such as beta-endorphin and endomorphin. Receptor for natural and synthetic opioids including morphine, heroin, DAMGO, fentanyl, etorphine, buprenorphin and methadone. Also activated by enkephalin peptides, such as Met-enkephalin or Met-enkephalin-Arg-Phe, with higher affinity for Met-enkephalin-Arg-Phe. Agonist binding to the receptor induces coupling to an inactive GDP-bound heterotrimeric G-protein complex and subsequent exchange of GDP for GTP in the G-protein alpha subunit leading to dissociation of the G-protein complex with the free GTP-bound G-protein alpha and the G-protein beta-gamma dimer activating downstream cellular effectors. The agonist- and cell type-specific activity is predominantly coupled to pertussis toxin-sensitive G(i) and G(o) G alpha proteins, GNAI1, GNAI2, GNAI3 and GNAO1, and to a lesser extent to pertussis toxin-insensitive G alpha proteins GNAZ and GNA15. They mediate an array of downstream cellular responses, including inhibition of adenylate cyclase activity and both N-type and L-type calcium channels, activation of inward rectifying potassium channels, mitogen-activated protein kinase (MAPK), phospholipase C (PLC), phosphoinositide/protein kinase (PKC), phosphoinositide 3-kinase (PI3K) and regulation of NF-kappa-B. Also couples to adenylate cyclase stimulatory G alpha proteins. The selective temporal coupling to G-proteins and subsequent signaling can be regulated by RGSZ proteins, such as RGS9, RGS17 and RGS4. Phosphorylation by members of the GPRK subfamily of Ser/Thr protein kinases and association with beta-arrestins is involved in short-term receptor desensitization. Beta-arrestins associate with the GPRK-phosphorylated receptor and uncouple it from the G-protein thus terminating signal transduction. The phosphorylated receptor is internalized through endocytosis via clathrin-coated pits which involves beta-arrestins. The activation of the ERK pathway occurs either in a G-protein-dependent or a beta-arrestin-dependent manner and is regulated by agonist-specific receptor phosphorylation. Acts as a class A G-protein coupled receptor (GPCR) which dissociates from beta-arrestin at or near the plasma membrane and undergoes rapid recycling. Receptor down-regulation pathways are varying with the agonist and occur dependent or independent of G-protein coupling. Endogenous ligands induce rapid desensitization, endocytosis and recycling. Heterooligomerization with other GPCRs can modulate agonist binding, signaling and trafficking properties. Involved in neurogenesis. This Pan troglodytes (Chimpanzee) protein is Mu-type opioid receptor (OPRM1).